Reading from the N-terminus, the 261-residue chain is tRNA pseudouridine synthase A (261 aa).

The active-site Nucleophile is aspartate 51. Tyrosine 109 lines the substrate pocket.

Belongs to the tRNA pseudouridine synthase TruA family. Homodimer.

It catalyses the reaction uridine(38/39/40) in tRNA = pseudouridine(38/39/40) in tRNA. Formation of pseudouridine at positions 38, 39 and 40 in the anticodon stem and loop of transfer RNAs. The chain is tRNA pseudouridine synthase A from Shewanella sediminis (strain HAW-EB3).